A 414-amino-acid polypeptide reads, in one-letter code: Peptide chain release factor subunit 1 (414 aa).

The protein belongs to the eukaryotic release factor 1 family. In terms of assembly, heterodimer of two subunits, one of which binds GTP.

Its subcellular location is the cytoplasm. Functionally, directs the termination of nascent peptide synthesis (translation) in response to the termination codons UAA, UAG and UGA. The sequence is that of Peptide chain release factor subunit 1 (prf1) from Pyrococcus abyssi (strain GE5 / Orsay).